The primary structure comprises 164 residues: Peptide methionine sulfoxide reductase MsrA (164 aa).

The active site involves Cys16.

Belongs to the MsrA Met sulfoxide reductase family.

It carries out the reaction L-methionyl-[protein] + [thioredoxin]-disulfide + H2O = L-methionyl-(S)-S-oxide-[protein] + [thioredoxin]-dithiol. The catalysed reaction is [thioredoxin]-disulfide + L-methionine + H2O = L-methionine (S)-S-oxide + [thioredoxin]-dithiol. Its function is as follows. Has an important function as a repair enzyme for proteins that have been inactivated by oxidation. Catalyzes the reversible oxidation-reduction of methionine sulfoxide in proteins to methionine. This Clostridium tetani (strain Massachusetts / E88) protein is Peptide methionine sulfoxide reductase MsrA.